The following is a 123-amino-acid chain: Large ribosomal subunit protein bL19c (123 aa).

It belongs to the bacterial ribosomal protein bL19 family.

It localises to the plastid. The protein localises to the chloroplast. This chain is Large ribosomal subunit protein bL19c (rpl19), found in Porphyra purpurea (Red seaweed).